The chain runs to 1058 residues: Carbamoyl phosphate synthase large chain (1058 aa).

The interval 1–401 (MPKRKDIKTI…SLLKAIRSLE (401 aa)) is carboxyphosphate synthetic domain. Residues Arg129, Arg169, Gly175, Gly176, Lys208, Ile210, Glu215, Gly241, Ile242, His243, Gln284, and Glu298 each coordinate ATP. An ATP-grasp 1 domain is found at 133–327 (RDLMNELNEP…IAKIAAKIAV (195 aa)). Mg(2+)-binding residues include Gln284, Glu298, and Asn300. Mn(2+) contacts are provided by Gln284, Glu298, and Asn300. The tract at residues 402–546 (YGVHHLGLPN…YSTYEFENES (145 aa)) is oligomerization domain. Positions 547-929 (TRSDKEKIVV…ALYKGLTAAG (383 aa)) are carbamoyl phosphate synthetic domain. The ATP-grasp 2 domain maps to 671-861 (EKLLIGLKIP…VANIAMQCIL (191 aa)). Arg707, Arg746, Leu748, Glu752, Gly777, Val778, His779, Ser780, Gln820, and Glu832 together coordinate ATP. Residues Gln820, Glu832, and Asn834 each coordinate Mg(2+). Gln820, Glu832, and Asn834 together coordinate Mn(2+). The region spanning 930–1058 (IKIKDYGRVL…ESMSFRVQTL (129 aa)) is the MGS-like domain. The interval 930–1058 (IKIKDYGRVL…ESMSFRVQTL (129 aa)) is allosteric domain.

Belongs to the CarB family. In terms of assembly, composed of two chains; the small (or glutamine) chain promotes the hydrolysis of glutamine to ammonia, which is used by the large (or ammonia) chain to synthesize carbamoyl phosphate. Tetramer of heterodimers (alpha,beta)4. Mg(2+) serves as cofactor. It depends on Mn(2+) as a cofactor.

It carries out the reaction hydrogencarbonate + L-glutamine + 2 ATP + H2O = carbamoyl phosphate + L-glutamate + 2 ADP + phosphate + 2 H(+). The enzyme catalyses hydrogencarbonate + NH4(+) + 2 ATP = carbamoyl phosphate + 2 ADP + phosphate + 2 H(+). It participates in amino-acid biosynthesis; L-arginine biosynthesis; carbamoyl phosphate from bicarbonate: step 1/1. It functions in the pathway pyrimidine metabolism; UMP biosynthesis via de novo pathway; (S)-dihydroorotate from bicarbonate: step 1/3. Its function is as follows. Large subunit of the glutamine-dependent carbamoyl phosphate synthetase (CPSase). CPSase catalyzes the formation of carbamoyl phosphate from the ammonia moiety of glutamine, carbonate, and phosphate donated by ATP, constituting the first step of 2 biosynthetic pathways, one leading to arginine and/or urea and the other to pyrimidine nucleotides. The large subunit (synthetase) binds the substrates ammonia (free or transferred from glutamine from the small subunit), hydrogencarbonate and ATP and carries out an ATP-coupled ligase reaction, activating hydrogencarbonate by forming carboxy phosphate which reacts with ammonia to form carbamoyl phosphate. In Fusobacterium nucleatum subsp. nucleatum (strain ATCC 25586 / DSM 15643 / BCRC 10681 / CIP 101130 / JCM 8532 / KCTC 2640 / LMG 13131 / VPI 4355), this protein is Carbamoyl phosphate synthase large chain.